A 237-amino-acid chain; its full sequence is MAGTADAVAAAKRAAGYQAAEMVEDGMVIGLGTGSTVFYAIECLSGRIRDGLSVVGVPTSYQTAMKAREYGIPLTTLDDNPVLDLAIDGADQADPQFRLIKGRGAAITREKCVASAAFRFIVVVDEAKMVKKLAGVVPVETLPFATKTALAQLRGLGCRPFIREAVKKDGPVITDNGNFIVDCQFEEIPDPALLEAGIAAIPGVIESGLFTRLTGNTTIIVGNEKKCSVLTSPDVVP.

Substrate-binding positions include 33-36, 88-91, and 101-104; these read TGST, DGAD, and KGRG. E110 (proton acceptor) is an active-site residue. K128 provides a ligand contact to substrate.

It belongs to the ribose 5-phosphate isomerase family. As to quaternary structure, homodimer.

The enzyme catalyses aldehydo-D-ribose 5-phosphate = D-ribulose 5-phosphate. Its pathway is carbohydrate degradation; pentose phosphate pathway; D-ribose 5-phosphate from D-ribulose 5-phosphate (non-oxidative stage): step 1/1. Functionally, catalyzes the reversible conversion of ribose-5-phosphate to ribulose 5-phosphate. The sequence is that of Ribose-5-phosphate isomerase A from Methanoregula boonei (strain DSM 21154 / JCM 14090 / 6A8).